Reading from the N-terminus, the 120-residue chain is NAD(P)H-quinone oxidoreductase subunit 3 (120 aa).

3 helical membrane passes run 10 to 30 (FLGF…TNLI), 64 to 84 (MFAL…PWAV), and 89 to 109 (LGLL…IALA).

This sequence belongs to the complex I subunit 3 family. In terms of assembly, NDH-1 can be composed of about 15 different subunits; different subcomplexes with different compositions have been identified which probably have different functions.

It is found in the cellular thylakoid membrane. It carries out the reaction a plastoquinone + NADH + (n+1) H(+)(in) = a plastoquinol + NAD(+) + n H(+)(out). The catalysed reaction is a plastoquinone + NADPH + (n+1) H(+)(in) = a plastoquinol + NADP(+) + n H(+)(out). NDH-1 shuttles electrons from an unknown electron donor, via FMN and iron-sulfur (Fe-S) centers, to quinones in the respiratory and/or the photosynthetic chain. The immediate electron acceptor for the enzyme in this species is believed to be plastoquinone. Couples the redox reaction to proton translocation, and thus conserves the redox energy in a proton gradient. Cyanobacterial NDH-1 also plays a role in inorganic carbon-concentration. This is NAD(P)H-quinone oxidoreductase subunit 3 from Prochlorococcus marinus subsp. pastoris (strain CCMP1986 / NIES-2087 / MED4).